Reading from the N-terminus, the 777-residue chain is Disintegrin and metalloproteinase domain-containing protein 5 (777 aa).

A signal peptide spans 1 to 16; it reads MFLVLVLLTGLGRLYA. Residues 17–142 constitute a propeptide that is removed on maturation; sequence GNNPRKTFVQ…VLSGFTHMIY (126 aa). The Extracellular portion of the chain corresponds to 17-706; it reads GNNPRKTFVQ…RGYVVLSTKR (690 aa). Residues Asn49 and Asn123 are each glycosylated (N-linked (GlcNAc...) asparagine). A Peptidase M12B domain is found at 185-382; it reads RYIDMYIVVN…YGLTCLRNTS (198 aa). Cystine bridges form between Cys294/Cys377, Cys336/Cys361, Cys338/Cys343, and Cys456/Cys477. In terms of domain architecture, Disintegrin spans 396–485; that stretch reads RRICGNSIRE…DCVHDTYAQN (90 aa). Residue Asn566 is glycosylated (N-linked (GlcNAc...) asparagine). The EGF-like domain maps to 633–667; the sequence is NNGSCNAEIHCQGRGICNNLDNCHCHKGFVPPECA. 3 disulfide bridges follow: Cys637/Cys649, Cys643/Cys655, and Cys657/Cys666. Residues 707–727 traverse the membrane as a helical segment; that stretch reads FQLIFYIGIPVIIIVAAILIK. At 728–777 the chain is on the cytoplasmic side; sequence QNQLGKLFCRGEKEHMSSVSEDGSRSVTLSATESKFPADTEHSNKEEDAQ. Positions 744–760 are enriched in polar residues; sequence SSVSEDGSRSVTLSATE. Residues 744-777 are disordered; sequence SSVSEDGSRSVTLSATESKFPADTEHSNKEEDAQ. Positions 763 to 777 are enriched in basic and acidic residues; the sequence is FPADTEHSNKEEDAQ.

As to quaternary structure, interacts with TEX101. In terms of processing, subject to proteolytic processing during epididymal transit of spermatozoa. Detected in testis.

The protein resides in the membrane. Functionally, this is a non catalytic metalloprotease-like protein. May play a role in sperm-egg fusion. In Cavia porcellus (Guinea pig), this protein is Disintegrin and metalloproteinase domain-containing protein 5 (ADAM5).